The following is a 218-amino-acid chain: Antifreeze protein Maxi (218 aa).

Residues 1–23 (MALSLFTVGQFIFLFWTISITEA) form the signal peptide.

The protein belongs to the type-I AFP family. In terms of assembly, homodimer. Detected in blood serum (at protein level). Detected in liver.

The protein localises to the secreted. Functionally, contributes to protect fish blood from freezing at subzero sea water temperatures. Lowers the blood freezing point by about 1.1 degrees at a concentration of 0.1 mg/ml, and by about 1.5 degrees at a concentration of 0.2 mg/ml. Binds to nascent ice crystals and prevents further growth. This is Antifreeze protein Maxi from Pseudopleuronectes americanus (Winter flounder).